The primary structure comprises 634 residues: Probable potassium transport system protein Kup (634 aa).

12 consecutive transmembrane segments (helical) span residues Ile21–Leu41, Ile61–Ile81, Ile110–Ile130, Pro148–Cys168, Phe180–Ala200, Phe217–Thr237, Trp258–Leu278, Gly296–Ile316, Ile348–Phe368, Ala377–Ala397, Leu408–Ile428, and Asp432–Leu452.

Belongs to the HAK/KUP transporter (TC 2.A.72) family.

Its subcellular location is the cell inner membrane. The catalysed reaction is K(+)(in) + H(+)(in) = K(+)(out) + H(+)(out). Its function is as follows. Transport of potassium into the cell. Likely operates as a K(+):H(+) symporter. The sequence is that of Probable potassium transport system protein Kup from Xylella fastidiosa (strain 9a5c).